A 256-amino-acid polypeptide reads, in one-letter code: Fructose-1,6-bisphosphatase/inositol-1-monophosphatase (256 aa).

Positions 67, 83, 85, and 86 each coordinate Mg(2+). Residues D86–S88, R170, I175, and R194 contribute to the substrate site. Mg(2+) is bound at residue D201.

This sequence belongs to the inositol monophosphatase superfamily. FBPase class 4 family. In terms of assembly, homodimer. It depends on Mg(2+) as a cofactor.

The catalysed reaction is beta-D-fructose 1,6-bisphosphate + H2O = beta-D-fructose 6-phosphate + phosphate. It carries out the reaction a myo-inositol phosphate + H2O = myo-inositol + phosphate. Phosphatase with broad specificity; it can dephosphorylate fructose 1,6-bisphosphate (FBP) and inositol-1-phosphate (IMP). However, while possessing a high FBPase activity in vitro, does not participate in gluconeogenesis in vivo. This Thermococcus kodakarensis (strain ATCC BAA-918 / JCM 12380 / KOD1) (Pyrococcus kodakaraensis (strain KOD1)) protein is Fructose-1,6-bisphosphatase/inositol-1-monophosphatase (suhB).